We begin with the raw amino-acid sequence, 1072 residues long: Carbamoyl phosphate synthase large chain (1072 aa).

The segment at 1-401 (MPKRLDINTI…SLLKAVRSLE (401 aa)) is carboxyphosphate synthetic domain. Residues Arg-129, Arg-169, Gly-175, Gly-176, Lys-208, Ile-210, Glu-215, Gly-241, Val-242, His-243, Gln-284, and Glu-298 each contribute to the ATP site. The region spanning 133–327 (RTLMQELNEP…IAKLAAKIAV (195 aa)) is the ATP-grasp 1 domain. The Mg(2+) site is built by Gln-284, Glu-298, and Asn-300. The Mn(2+) site is built by Gln-284, Glu-298, and Asn-300. Residues 402–546 (LGIYHLELDH…YSTYADENES (145 aa)) form an oligomerization domain region. A carbamoyl phosphate synthetic domain region spans residues 547-929 (IVTDRKSVVV…ALYKGLVASG (383 aa)). The 191-residue stretch at 671–861 (EAALTKLGIP…MANVATKVIL (191 aa)) folds into the ATP-grasp 2 domain. ATP contacts are provided by Arg-707, Arg-746, Glu-752, Gly-777, Val-778, His-779, Ser-780, Gln-820, and Glu-832. Gln-820, Glu-832, and Asn-834 together coordinate Mg(2+). Mn(2+) contacts are provided by Gln-820, Glu-832, and Asn-834. The 143-residue stretch at 930–1072 (INIPTHGSVI…QTKRHEVVHA (143 aa)) folds into the MGS-like domain. An allosteric domain region spans residues 930–1072 (INIPTHGSVI…QTKRHEVVHA (143 aa)).

This sequence belongs to the CarB family. In terms of assembly, composed of two chains; the small (or glutamine) chain promotes the hydrolysis of glutamine to ammonia, which is used by the large (or ammonia) chain to synthesize carbamoyl phosphate. Tetramer of heterodimers (alpha,beta)4. Requires Mg(2+) as cofactor. Mn(2+) serves as cofactor.

It catalyses the reaction hydrogencarbonate + L-glutamine + 2 ATP + H2O = carbamoyl phosphate + L-glutamate + 2 ADP + phosphate + 2 H(+). The catalysed reaction is hydrogencarbonate + NH4(+) + 2 ATP = carbamoyl phosphate + 2 ADP + phosphate + 2 H(+). It functions in the pathway amino-acid biosynthesis; L-arginine biosynthesis; carbamoyl phosphate from bicarbonate: step 1/1. The protein operates within pyrimidine metabolism; UMP biosynthesis via de novo pathway; (S)-dihydroorotate from bicarbonate: step 1/3. Functionally, large subunit of the glutamine-dependent carbamoyl phosphate synthetase (CPSase). CPSase catalyzes the formation of carbamoyl phosphate from the ammonia moiety of glutamine, carbonate, and phosphate donated by ATP, constituting the first step of 2 biosynthetic pathways, one leading to arginine and/or urea and the other to pyrimidine nucleotides. The large subunit (synthetase) binds the substrates ammonia (free or transferred from glutamine from the small subunit), hydrogencarbonate and ATP and carries out an ATP-coupled ligase reaction, activating hydrogencarbonate by forming carboxy phosphate which reacts with ammonia to form carbamoyl phosphate. The chain is Carbamoyl phosphate synthase large chain from Bacillus cereus (strain AH820).